A 266-amino-acid polypeptide reads, in one-letter code: Electron transfer flavoprotein subunit beta (266 aa).

The protein belongs to the ETF beta-subunit/FixA family. In terms of assembly, heterodimer of an alpha and a beta subunit. FAD serves as cofactor. Requires AMP as cofactor.

The electron transfer flavoprotein serves as a specific electron acceptor for other dehydrogenases. It transfers the electrons to the main respiratory chain via ETF-ubiquinone oxidoreductase (ETF dehydrogenase). The chain is Electron transfer flavoprotein subunit beta (etfB) from Mycobacterium leprae (strain TN).